A 2415-amino-acid chain; its full sequence is Spectrin alpha chain (2415 aa).

Spectrin repeat units lie at residues Arg-48–Gln-150, Leu-154–Leu-254, His-258–Glu-362, Leu-366–Ile-464, Asp-471–Asp-574, Arg-577–Glu-679, Gln-683–Leu-784, Gln-788–Asp-890, and Gln-894–Glu-963. Positions Thr-970–Ala-1029 constitute an SH3 domain. 2 positions are modified to phosphoserine: Ser-1032 and Ser-1034. Spectrin repeat units follow at residues Val-1079–Leu-1177, His-1181–Leu-1284, Tyr-1287–Gln-1391, Asp-1394–Gly-1496, Thr-1500–Glu-1604, Gln-1608–Glu-1710, Leu-1714–Glu-1816, Tyr-1820–Leu-1921, Tyr-1926–Leu-2028, Leu-2040–Leu-2141, and Leu-2154–Gln-2252. EF-hand domains follow at residues Asp-2265 to Asp-2300 and Gln-2308 to Glu-2343. Ca(2+)-binding residues include Asp-2278, Asp-2280, Ser-2282, Lys-2284, Glu-2289, Asp-2321, Asn-2323, Asp-2325, Tyr-2327, and Glu-2332.

This sequence belongs to the spectrin family. In terms of assembly, native spectrin molecule is a tetramer composed of two antiparallel heterodimers joined head to head so that each end of the native molecule includes the C-terminus of the alpha subunit and the N-terminus of the beta subunit. Interacts with calmodulin in a calcium-dependent manner, interacts with F-actin and also interacts with Lva. Interacts with Ten-m. In terms of tissue distribution, a substantial pool of maternal protein in the egg undergoes dynamic changes in distribution early in embryogenesis. In gastrulated embryo, the highest level of protein is found in the respiratory tract cells and the lowest in parts of the forming gut.

The protein resides in the cytoplasm. It is found in the cytoskeleton. It localises to the golgi apparatus. Its subcellular location is the cell projection. The protein localises to the cilium. The protein resides in the flagellum. Its function is as follows. Spectrin is the major constituent of the cytoskeletal network underlying the erythrocyte plasma membrane. It associates with band 4.1 and actin to form the cytoskeletal superstructure of the erythrocyte plasma membrane. Essential for larval survival and development. Stabilizes cell to cell interactions that are critical for the maintenance of cell shape and subcellular organization within embryonic tissues. Lva and spectrin may form a Golgi-based scaffold that mediates interaction of Golgi bodies with microtubules and facilitates Golgi-derived membrane secretion required for the formation of furrows during cellularization. The polypeptide is Spectrin alpha chain (alpha-Spec) (Drosophila melanogaster (Fruit fly)).